The chain runs to 232 residues: MDNFNVVANEDNQVNDVKPPPPPPRVCARCDSDNTKFCYYNNYSEFQPRYFCKNCRRYWTHGGALRNVPIGGSSRAKRTRINQPSVAQMVSVGIQPGSHKPFFNVQENNDFVGSFGASSSSFVAAVGNRFSSLSHIHGGMVTNVHPTQTFRPNHRLAFHNGSFEQDYYDVGSDNLLVNQQVGGYVDNHNGYHMNQVDQYNWNQSFNNAMNMNYNNASTSGRMHPSHLEKGGP.

The Dof-type zinc-finger motif lies at 25–79 (RVCARCDSDNTKFCYYNNYSEFQPRYFCKNCRRYWTHGGALRNVPIGGSSRAKRT). Residues C27, C30, C52, and C55 each coordinate Zn(2+).

The protein localises to the nucleus. Its function is as follows. Transcription factor that binds specifically to a 5'-AA[AG]G-3' consensus core sequence. The chain is Dof zinc finger protein DOF4.3 (DOF4.3) from Arabidopsis thaliana (Mouse-ear cress).